Here is a 156-residue protein sequence, read N- to C-terminus: Small ribosomal subunit protein uS7 (156 aa).

Belongs to the universal ribosomal protein uS7 family. In terms of assembly, part of the 30S ribosomal subunit. Contacts proteins S9 and S11.

Its function is as follows. One of the primary rRNA binding proteins, it binds directly to 16S rRNA where it nucleates assembly of the head domain of the 30S subunit. Is located at the subunit interface close to the decoding center, probably blocks exit of the E-site tRNA. The protein is Small ribosomal subunit protein uS7 of Prochlorococcus marinus (strain MIT 9301).